A 339-amino-acid polypeptide reads, in one-letter code: Biotin synthase (339 aa).

One can recognise a Radical SAM core domain in the interval 47 to 276 (FYGKKVKLNM…SKEIRISGGR (230 aa)). Residues C65, C69, and C72 each coordinate [4Fe-4S] cluster. Residues C109, C141, C201, and R271 each coordinate [2Fe-2S] cluster.

This sequence belongs to the radical SAM superfamily. Biotin synthase family. In terms of assembly, homodimer. The cofactor is [4Fe-4S] cluster. Requires [2Fe-2S] cluster as cofactor.

The catalysed reaction is (4R,5S)-dethiobiotin + (sulfur carrier)-SH + 2 reduced [2Fe-2S]-[ferredoxin] + 2 S-adenosyl-L-methionine = (sulfur carrier)-H + biotin + 2 5'-deoxyadenosine + 2 L-methionine + 2 oxidized [2Fe-2S]-[ferredoxin]. Its pathway is cofactor biosynthesis; biotin biosynthesis; biotin from 7,8-diaminononanoate: step 2/2. Catalyzes the conversion of dethiobiotin (DTB) to biotin by the insertion of a sulfur atom into dethiobiotin via a radical-based mechanism. This is Biotin synthase from Bacillus velezensis (strain DSM 23117 / BGSC 10A6 / LMG 26770 / FZB42) (Bacillus amyloliquefaciens subsp. plantarum).